Reading from the N-terminus, the 167-residue chain is D-aminoacyl-tRNA deacylase 2 (167 aa).

A Gly-transPro motif, allows the protein to recognize chirality of D-amino acids motif is present at residues 159 to 160 (GP).

This sequence belongs to the DTD family. As to quaternary structure, homodimer.

It localises to the cytoplasm. The enzyme catalyses a D-aminoacyl-tRNA + H2O = a tRNA + a D-alpha-amino acid + H(+). It catalyses the reaction glycyl-tRNA(Ala) + H2O = tRNA(Ala) + glycine + H(+). The catalysed reaction is D-tyrosyl-tRNA(Tyr) + H2O = D-tyrosine + tRNA(Tyr). It carries out the reaction L-alanyl-tRNA(Thr) + H2O = tRNA(Thr) + L-alanine + H(+). Deacylates mischarged D-aminoacyl-tRNAs. Also deacylates mischarged glycyl-tRNA(Ala), protecting cells against glycine mischarging by AlaRS. Probably acts by rejecting L-amino acids from its binding site rather than specific recognition of D-amino acids. Catalyzes the hydrolysis of D-tyrosyl-tRNA(Tyr), has no activity on correctly charged L-tyrosyl-tRNA(Tyr). By recycling D-aminoacyl-tRNA to D-amino acids and free tRNA molecules, this enzyme counteracts the toxicity associated with the formation of D-aminoacyl-tRNA entities in vivo and helps enforce protein L-homochirality. In contrast to DTD1, deacylates L-Ala mischarged on tRNA(Thr)(G4.U69) by alanine-tRNA ligase AARS. Can deacylate L-Ala due to a relaxed specificity for substrate chirality caused by the trans conformation of the Gly-Pro motif in the active site. Also hydrolyzes correctly charged, achiral, glycyl-tRNA(Gly) in vitro, although in vivo EEF1A1/EF-Tu may protect cognate achiral glycyl-tRNA(Gly) from DTD2-mediated deacetylation. The sequence is that of D-aminoacyl-tRNA deacylase 2 (DTD2) from Gallus gallus (Chicken).